We begin with the raw amino-acid sequence, 106 residues long: ATP-dependent Clp protease adapter protein ClpS (106 aa).

The tract at residues 1–20 is disordered; that stretch reads MKVDMSTSVKDDAQLEASRV.

Belongs to the ClpS family. As to quaternary structure, binds to the N-terminal domain of the chaperone ClpA.

Its function is as follows. Involved in the modulation of the specificity of the ClpAP-mediated ATP-dependent protein degradation. This is ATP-dependent Clp protease adapter protein ClpS from Chromobacterium violaceum (strain ATCC 12472 / DSM 30191 / JCM 1249 / CCUG 213 / NBRC 12614 / NCIMB 9131 / NCTC 9757 / MK).